A 492-amino-acid chain; its full sequence is Octanoyltransferase (492 aa).

The tract at residues 1–255 (MRCILLGSGT…GYDGLEAIID (255 aa)) is unknown. The tract at residues 256–492 (EKGIRIKDFE…AVFRRNFGAL (237 aa)) is lipB domain. Residues 305–492 (RKPQNTLLFC…AVFRRNFGAL (188 aa)) form the BPL/LPL catalytic domain. Substrate is bound by residues 350-357 (RGGDITYH), 423-425 (AIG), and 436-438 (GFA). Catalysis depends on cysteine 454, which acts as the Acyl-thioester intermediate.

It in the C-terminal section; belongs to the LipB family.

The protein resides in the cytoplasm. The catalysed reaction is octanoyl-[ACP] + L-lysyl-[protein] = N(6)-octanoyl-L-lysyl-[protein] + holo-[ACP] + H(+). It functions in the pathway protein modification; protein lipoylation via endogenous pathway; protein N(6)-(lipoyl)lysine from octanoyl-[acyl-carrier-protein]: step 1/2. Functionally, catalyzes the transfer of endogenously produced octanoic acid from octanoyl-acyl-carrier-protein onto the lipoyl domains of lipoate-dependent enzymes. Lipoyl-ACP can also act as a substrate although octanoyl-ACP is likely to be the physiological substrate. This chain is Octanoyltransferase, found in Porphyromonas gingivalis (strain ATCC BAA-308 / W83).